The chain runs to 62 residues: DNA gyrase inhibitor YacG (62 aa).

Zn(2+)-binding residues include cysteine 9, cysteine 12, cysteine 27, and cysteine 31. Residues 43–52 (GYRIPGEKAP) are compositionally biased toward basic and acidic residues. Positions 43-62 (GYRIPGEKAPESGGEEPGDE) are disordered.

Belongs to the DNA gyrase inhibitor YacG family. As to quaternary structure, interacts with GyrB. Requires Zn(2+) as cofactor.

Functionally, inhibits all the catalytic activities of DNA gyrase by preventing its interaction with DNA. Acts by binding directly to the C-terminal domain of GyrB, which probably disrupts DNA binding by the gyrase. The sequence is that of DNA gyrase inhibitor YacG from Geobacter sp. (strain M21).